Here is a 250-residue protein sequence, read N- to C-terminus: 5-oxoprolinase subunit A (250 aa).

It belongs to the LamB/PxpA family. Forms a complex composed of PxpA, PxpB and PxpC.

It carries out the reaction 5-oxo-L-proline + ATP + 2 H2O = L-glutamate + ADP + phosphate + H(+). Catalyzes the cleavage of 5-oxoproline to form L-glutamate coupled to the hydrolysis of ATP to ADP and inorganic phosphate. The protein is 5-oxoprolinase subunit A of Staphylococcus aureus (strain NCTC 8325 / PS 47).